Reading from the N-terminus, the 383-residue chain is Probable purine permease 16 (383 aa).

The next 10 membrane-spanning stretches (helical) occupy residues 30–50, 72–92, 113–133, 138–158, 166–186, 203–223, 247–267, 297–317, 322–342, and 346–363; these read ISVF…MLLL, WTQA…FFIL, VLSL…LYAL, VGWG…SAFI, WIII…PAFA, LILI…QLGF, ICVS…SGEF, VWAV…ADVV, SPVV…EFGW, and GALL…YSLH.

It belongs to the purine permeases (TC 2.A.7.14) family.

Its subcellular location is the membrane. The polypeptide is Probable purine permease 16 (PUP16) (Arabidopsis thaliana (Mouse-ear cress)).